We begin with the raw amino-acid sequence, 399 residues long: Formate-dependent phosphoribosylglycinamide formyltransferase (399 aa).

N(1)-(5-phospho-beta-D-ribosyl)glycinamide is bound by residues 22–23 and Glu-82; that span reads EL. Residues Arg-115, Lys-157, 162 to 167, 197 to 200, and Glu-205 contribute to the ATP site; these read SSGKGQ and EAVV. Residues 120–315 enclose the ATP-grasp domain; it reads RLAAEELGLQ…EFELHARAIL (196 aa). Glu-274 and Glu-286 together coordinate Mg(2+). Residues Asp-293, Lys-362, and 369-370 contribute to the N(1)-(5-phospho-beta-D-ribosyl)glycinamide site; that span reads RR.

It belongs to the PurK/PurT family. Homodimer.

It carries out the reaction N(1)-(5-phospho-beta-D-ribosyl)glycinamide + formate + ATP = N(2)-formyl-N(1)-(5-phospho-beta-D-ribosyl)glycinamide + ADP + phosphate + H(+). It participates in purine metabolism; IMP biosynthesis via de novo pathway; N(2)-formyl-N(1)-(5-phospho-D-ribosyl)glycinamide from N(1)-(5-phospho-D-ribosyl)glycinamide (formate route): step 1/1. Its function is as follows. Involved in the de novo purine biosynthesis. Catalyzes the transfer of formate to 5-phospho-ribosyl-glycinamide (GAR), producing 5-phospho-ribosyl-N-formylglycinamide (FGAR). Formate is provided by PurU via hydrolysis of 10-formyl-tetrahydrofolate. This Thioalkalivibrio sulfidiphilus (strain HL-EbGR7) protein is Formate-dependent phosphoribosylglycinamide formyltransferase.